Consider the following 678-residue polypeptide: Secretin ExeD (678 aa).

Positions 1–25 (MINKGKSWRLATVAAALMMAGSAWA) are cleaved as a signal peptide. Residues 26–122 (TEYSASFKNA…VVDETNPGIG (97 aa)) form an N0 region. Residues 124-188 (EMVTRVVPVR…EVVRRVDKAG (65 aa)) are N1. An N2 region spans residues 189 to 264 (DQEVDIIKLR…MVRQLDRDLQ (76 aa)). The tract at residues 267-347 (GNTRVFYLKY…ELEQVVAKLD (81 aa)) is N3. The secretin stretch occupies residues 352 to 602 (QVLVEAIIVE…VFIRPTILRD (251 aa)). A s domain region spans residues 604 to 678 (HVYSGISSNK…GAQPFVQGNK (75 aa)).

It belongs to the bacterial secretin family. GSP D subfamily. Forms a cylindrical channel with 15 subunits.

It localises to the cell outer membrane. Its function is as follows. Involved in a type II secretion system (T2SS, formerly general secretion pathway, GSP) for the export of proteins. This subunit forms the outer membrane channel. The sequence is that of Secretin ExeD (exeD) from Aeromonas salmonicida.